The chain runs to 205 residues: Holliday junction branch migration complex subunit RuvA (205 aa).

Positions Met1 to Ile64 are domain I. Positions Ser65–Glu143 are domain II. The segment at Arg144 to Glu156 is flexible linker. The interval Ala157–Leu205 is domain III.

The protein belongs to the RuvA family. As to quaternary structure, homotetramer. Forms an RuvA(8)-RuvB(12)-Holliday junction (HJ) complex. HJ DNA is sandwiched between 2 RuvA tetramers; dsDNA enters through RuvA and exits via RuvB. An RuvB hexamer assembles on each DNA strand where it exits the tetramer. Each RuvB hexamer is contacted by two RuvA subunits (via domain III) on 2 adjacent RuvB subunits; this complex drives branch migration. In the full resolvosome a probable DNA-RuvA(4)-RuvB(12)-RuvC(2) complex forms which resolves the HJ.

The protein resides in the cytoplasm. In terms of biological role, the RuvA-RuvB-RuvC complex processes Holliday junction (HJ) DNA during genetic recombination and DNA repair, while the RuvA-RuvB complex plays an important role in the rescue of blocked DNA replication forks via replication fork reversal (RFR). RuvA specifically binds to HJ cruciform DNA, conferring on it an open structure. The RuvB hexamer acts as an ATP-dependent pump, pulling dsDNA into and through the RuvAB complex. HJ branch migration allows RuvC to scan DNA until it finds its consensus sequence, where it cleaves and resolves the cruciform DNA. This chain is Holliday junction branch migration complex subunit RuvA, found in Shewanella halifaxensis (strain HAW-EB4).